The chain runs to 315 residues: Protease HtpX homolog (315 aa).

A helical membrane pass occupies residues 16-36 (LFMGIGYLIGGASGALIALVV). Zn(2+) is bound at residue histidine 130. Glutamate 131 is an active-site residue. Histidine 134 serves as a coordination point for Zn(2+). The next 2 helical transmembrane spans lie at 145 to 165 (ITAT…FFGG) and 172 to 192 (GPGL…AMLV). Position 201 (glutamate 201) interacts with Zn(2+). The segment at 282–315 (GGGGASIGRPAGPSPRGAPRSPWSGQPRARGPWG) is disordered. Residues 288 to 303 (IGRPAGPSPRGAPRSP) show a composition bias toward low complexity.

Belongs to the peptidase M48B family. Requires Zn(2+) as cofactor.

The protein localises to the cell inner membrane. This Rhodopseudomonas palustris (strain BisB5) protein is Protease HtpX homolog.